We begin with the raw amino-acid sequence, 160 residues long: Cytochrome b6-f complex subunit 4 (160 aa).

3 helical membrane passes run 36–56, 95–115, and 131–151; these read LLYIFPVCILGTIACCIGLGV, LLGVLSMAAVPIGLITVPFIE, and LVFLFGTFTAFWLGIGATMPI.

The protein belongs to the cytochrome b family. PetD subfamily. The 4 large subunits of the cytochrome b6-f complex are cytochrome b6, subunit IV (17 kDa polypeptide, petD), cytochrome f and the Rieske protein, while the 4 small subunits are petG, petL, petM and petN. The complex functions as a dimer.

The protein localises to the plastid. It localises to the chloroplast thylakoid membrane. Its function is as follows. Component of the cytochrome b6-f complex, which mediates electron transfer between photosystem II (PSII) and photosystem I (PSI), cyclic electron flow around PSI, and state transitions. In Emiliania huxleyi (Coccolithophore), this protein is Cytochrome b6-f complex subunit 4.